A 226-amino-acid chain; its full sequence is Low-molecular weight cobalt-containing nitrile hydratase subunit beta (226 aa).

The tract at residues 1 to 22 (MDGIHDLGGRAGLGPIKPESDE) is disordered.

The protein belongs to the nitrile hydratase subunit beta family. In terms of assembly, heterodimer of an alpha and a beta chain.

The catalysed reaction is an aliphatic primary amide = an aliphatic nitrile + H2O. Its function is as follows. NHase catalyzes the hydration of various nitrile compounds to the corresponding amides. The protein is Low-molecular weight cobalt-containing nitrile hydratase subunit beta of Rhodococcus rhodochrous.